A 287-amino-acid polypeptide reads, in one-letter code: 4-hydroxybenzoate octaprenyltransferase (287 aa).

The next 8 helical transmembrane spans lie at isoleucine 19 to leucine 39, tryptophan 42 to isoleucine 62, phenylalanine 95 to isoleucine 115, tyrosine 136 to alanine 156, tryptophan 166 to valine 186, isoleucine 210 to alanine 230, glycine 233 to isoleucine 253, and alanine 264 to leucine 284.

The protein belongs to the UbiA prenyltransferase family. It depends on Mg(2+) as a cofactor.

Its subcellular location is the cell inner membrane. It carries out the reaction all-trans-octaprenyl diphosphate + 4-hydroxybenzoate = 4-hydroxy-3-(all-trans-octaprenyl)benzoate + diphosphate. Its pathway is cofactor biosynthesis; ubiquinone biosynthesis. Its function is as follows. Catalyzes the prenylation of para-hydroxybenzoate (PHB) with an all-trans polyprenyl group. Mediates the second step in the final reaction sequence of ubiquinone-8 (UQ-8) biosynthesis, which is the condensation of the polyisoprenoid side chain with PHB, generating the first membrane-bound Q intermediate 3-octaprenyl-4-hydroxybenzoate. The protein is 4-hydroxybenzoate octaprenyltransferase of Aliivibrio fischeri (strain MJ11) (Vibrio fischeri).